A 161-amino-acid chain; its full sequence is Phosphopantetheine adenylyltransferase (161 aa).

Ser10 serves as a coordination point for substrate. ATP is bound by residues 10–11 and His18; that span reads SF. Residues Lys42, Leu74, and Arg88 each contribute to the substrate site. Residues 88-89, Glu99, and 124-130 each bind ATP; these read RG and YSFLSSS.

The protein belongs to the bacterial CoaD family. In terms of assembly, homohexamer. Mg(2+) is required as a cofactor.

It is found in the cytoplasm. It carries out the reaction (R)-4'-phosphopantetheine + ATP + H(+) = 3'-dephospho-CoA + diphosphate. It functions in the pathway cofactor biosynthesis; coenzyme A biosynthesis; CoA from (R)-pantothenate: step 4/5. Its function is as follows. Reversibly transfers an adenylyl group from ATP to 4'-phosphopantetheine, yielding dephospho-CoA (dPCoA) and pyrophosphate. This chain is Phosphopantetheine adenylyltransferase, found in Bacillus subtilis (strain 168).